We begin with the raw amino-acid sequence, 233 residues long: Superoxide dismutase [Mn], mitochondrial (233 aa).

A mitochondrion-targeting transit peptide spans 1-27; that stretch reads MALRSLVTRKNLPSAFKAATGLGQLRG. Residues His-55, His-103, Asp-192, and His-196 each coordinate Mn(2+).

The protein belongs to the iron/manganese superoxide dismutase family. In terms of assembly, homotetramer. Requires Mn(2+) as cofactor. In terms of tissue distribution, present in all tissues examined (leaf, petiole, root, latex, callus) with young leaves showing the highest levels in intact plants.

The protein localises to the mitochondrion matrix. It catalyses the reaction 2 superoxide + 2 H(+) = H2O2 + O2. In terms of biological role, destroys superoxide anion radicals which are normally produced within the cells and which are toxic to biological systems. In Hevea brasiliensis (Para rubber tree), this protein is Superoxide dismutase [Mn], mitochondrial (SODA).